The chain runs to 114 residues: Large ribosomal subunit protein uL22c (114 aa).

It belongs to the universal ribosomal protein uL22 family. As to quaternary structure, part of the 50S ribosomal subunit.

It localises to the plastid. Its subcellular location is the cyanelle. Its function is as follows. This protein binds specifically to 23S rRNA. In terms of biological role, the globular domain of the protein is located near the polypeptide exit tunnel on the outside of the subunit, while an extended beta-hairpin is found that lines the wall of the exit tunnel in the center of the 70S ribosome. The polypeptide is Large ribosomal subunit protein uL22c (rpl22) (Cyanophora paradoxa).